Reading from the N-terminus, the 236-residue chain is Small ribosomal subunit protein uS3 (236 aa).

The region spanning 39 to 107 (IREILHKELK…DVVINIVEIR (69 aa)) is the KH type-2 domain. Positions 213-236 (MAQDKRMNEGGGESSQPRSRRDAA) are disordered.

Belongs to the universal ribosomal protein uS3 family. Part of the 30S ribosomal subunit. Forms a tight complex with proteins S10 and S14.

In terms of biological role, binds the lower part of the 30S subunit head. Binds mRNA in the 70S ribosome, positioning it for translation. The protein is Small ribosomal subunit protein uS3 of Bradyrhizobium sp. (strain BTAi1 / ATCC BAA-1182).